The following is a 100-amino-acid chain: Large ribosomal subunit protein uL23 (100 aa).

The protein belongs to the universal ribosomal protein uL23 family. Part of the 50S ribosomal subunit. Contacts protein L29, and trigger factor when it is bound to the ribosome.

Functionally, one of the early assembly proteins it binds 23S rRNA. One of the proteins that surrounds the polypeptide exit tunnel on the outside of the ribosome. Forms the main docking site for trigger factor binding to the ribosome. This chain is Large ribosomal subunit protein uL23, found in Shewanella frigidimarina (strain NCIMB 400).